A 191-amino-acid chain; its full sequence is Penicillin-binding protein activator LpoB (191 aa).

Residues 1–16 (MKRYLSLALAALVLTG) form the signal peptide. Residue cysteine 17 is the site of N-palmitoyl cysteine attachment. A lipid anchor (S-diacylglycerol cysteine) is attached at cysteine 17.

This sequence belongs to the LpoB family. As to quaternary structure, interacts with PBP1b.

It is found in the cell outer membrane. In terms of biological role, regulator of peptidoglycan synthesis that is essential for the function of penicillin-binding protein 1B (PBP1b). The chain is Penicillin-binding protein activator LpoB from Yersinia pestis (strain D182038).